The sequence spans 286 residues: MEPSAEIPLGKGKETGRSPLIATRRKTGLVKAKIKTNSSFSMFRRADTMRTHAQFTNITVGWKSLCPITAEGQVNVAIYHESTRVPVLNLWSPVSSSWKHLATGSLGFVSLNHCPYVVEGRISGFEGEEAGLVTLTLHLDTGLESDDIQKCRLFSEHPELAGGSLYLYTSYTSSPIPDSNLPALRTEIDDTIAAIWRMSGGKMSITTSHALGLIATFRVKIESLLGEYPDDAFSAQVENLVKDFLLVSSTAEITRSYRTCLAKVLSSMTTYDKKYWDTIITGPSSI.

This sequence belongs to the nucleorhabdovirus type-1 movement protein family.

In terms of biological role, transports viral genome to neighboring plant cells directly through plasmosdesmata, without any budding. The movement protein allows efficient cell to cell propagation, by bypassing the host cell wall barrier. The chain is Putative movement protein 3 (3) from Rottboellia (Sorghum).